Reading from the N-terminus, the 280-residue chain is Chlorophyll a-b binding protein CP29 (280 aa).

Positions 1-42 are disordered; sequence MVFKFPTPPGTQKKAGTTATKPAPKATTKKVATSTGTRSGGV. At valine 2 the chain carries N-acetylvaline. Threonine 7 is modified (phosphothreonine; in State 1 and State 2). Over residues 10 to 37 the composition is skewed to low complexity; the sequence is GTQKKAGTTATKPAPKATTKKVATSTGT. Residue threonine 17 is modified to Phosphothreonine; in State 2. Residue threonine 33 is modified to Phosphothreonine; in State 1 and State 2. Tyrosine 47 serves as a coordination point for chlorophyll b. Chlorophyll a-binding residues include phenylalanine 73 and serine 79. Serine 103 carries the post-translational modification Phosphoserine; in State 2. Residues glutamate 137 and histidine 140 each coordinate chlorophyll a. Transmembrane regions (helical) follow at residues 143 to 163 and 176 to 196; these read WAML…VSWV and AGLS…ILVG. Residues serine 183, glutamate 199, and arginine 202 each coordinate chlorophyll b. Positions 238, 241, 243, and 255 each coordinate chlorophyll a. Residues 244–264 traverse the membrane as a helical segment; the sequence is LAMVSFFGYGVQALSTGEGAL.

Belongs to the light-harvesting chlorophyll a/b-binding (LHC) protein family. In terms of assembly, the LHC complex consists of chlorophyll a-b binding proteins. Binds at least 14 chlorophylls (8 Chl-a and 6 Chl-b) and carotenoids such as lutein and neoxanthin. serves as cofactor. Post-translationally, reversible phosphorylation plays a role in the State transition process and determines the affinity of LHCII for PSI and PSII.

It is found in the plastid. The protein localises to the chloroplast thylakoid membrane. The light-harvesting complex (LHC) functions as a light receptor, it captures and delivers excitation energy to photosystems with which it is closely associated. CP29 facilitates the State 1 to State 2 transition, where State I is induced by excess photosystem I (PSI) light and State 2 is induced by excess photosystem II (PSII) light. This Chlamydomonas reinhardtii (Chlamydomonas smithii) protein is Chlorophyll a-b binding protein CP29.